Consider the following 502-residue polypeptide: UPF0371 protein CLB_0371 (502 aa).

Belongs to the UPF0371 family.

The polypeptide is UPF0371 protein CLB_0371 (Clostridium botulinum (strain ATCC 19397 / Type A)).